The following is a 252-amino-acid chain: Trans-aconitate 2-methyltransferase (252 aa).

It belongs to the methyltransferase superfamily. Tam family.

The protein localises to the cytoplasm. It catalyses the reaction trans-aconitate + S-adenosyl-L-methionine = (E)-3-(methoxycarbonyl)pent-2-enedioate + S-adenosyl-L-homocysteine. Catalyzes the S-adenosylmethionine monomethyl esterification of trans-aconitate. This is Trans-aconitate 2-methyltransferase from Escherichia coli (strain 55989 / EAEC).